The sequence spans 276 residues: 4-deoxy-L-threo-5-hexosulose-uronate ketol-isomerase (276 aa).

The Zn(2+) site is built by His-194, His-196, Glu-201, and His-243.

The protein belongs to the KduI family. Zn(2+) is required as a cofactor.

It carries out the reaction 5-dehydro-4-deoxy-D-glucuronate = 3-deoxy-D-glycero-2,5-hexodiulosonate. It functions in the pathway glycan metabolism; pectin degradation; 2-dehydro-3-deoxy-D-gluconate from pectin: step 4/5. In terms of biological role, catalyzes the isomerization of 5-dehydro-4-deoxy-D-glucuronate to 3-deoxy-D-glycero-2,5-hexodiulosonate. In Shouchella clausii (strain KSM-K16) (Alkalihalobacillus clausii), this protein is 4-deoxy-L-threo-5-hexosulose-uronate ketol-isomerase.